The primary structure comprises 258 residues: UPF0246 protein IL2146 (258 aa).

It belongs to the UPF0246 family.

This is UPF0246 protein IL2146 from Idiomarina loihiensis (strain ATCC BAA-735 / DSM 15497 / L2-TR).